Reading from the N-terminus, the 139-residue chain is MLSPRKTKFRKQHRGRMRGKATRGNTLSFGDYGLQALEPSWITSRQIEAGRRAMTRYVRRGGKIWIRIFPDKPVTMRPAETRMGSGKGAPEYWVAVVKPGRIMYEMNGVPESTAREAMRLAAFKMPIKTKFVARPKEES.

Residues 1 to 21 (MLSPRKTKFRKQHRGRMRGKA) are compositionally biased toward basic residues. The segment at 1 to 23 (MLSPRKTKFRKQHRGRMRGKATR) is disordered.

The protein belongs to the universal ribosomal protein uL16 family. As to quaternary structure, part of the 50S ribosomal subunit.

Its function is as follows. Binds 23S rRNA and is also seen to make contacts with the A and possibly P site tRNAs. This chain is Large ribosomal subunit protein uL16, found in Acaryochloris marina (strain MBIC 11017).